The sequence spans 251 residues: Triosephosphate isomerase (251 aa).

9-11 serves as a coordination point for substrate; sequence NWK. Residue His95 is the Electrophile of the active site. Glu167 functions as the Proton acceptor in the catalytic mechanism. Substrate contacts are provided by residues Gly173, Ser212, and 233–234; that span reads GG.

Belongs to the triosephosphate isomerase family. As to quaternary structure, homodimer.

The protein localises to the cytoplasm. The enzyme catalyses D-glyceraldehyde 3-phosphate = dihydroxyacetone phosphate. It functions in the pathway carbohydrate biosynthesis; gluconeogenesis. It participates in carbohydrate degradation; glycolysis; D-glyceraldehyde 3-phosphate from glycerone phosphate: step 1/1. Involved in the gluconeogenesis. Catalyzes stereospecifically the conversion of dihydroxyacetone phosphate (DHAP) to D-glyceraldehyde-3-phosphate (G3P). The protein is Triosephosphate isomerase of Pseudomonas putida (strain ATCC 700007 / DSM 6899 / JCM 31910 / BCRC 17059 / LMG 24140 / F1).